The chain runs to 425 residues: MTHIDWLVQTDPLVAEMVQREVQRQQQHLELIASENFTSPAVMAAQGTVLTNKYAEGLPGKRYYGGCEFVDEVEQLAIDRAKELFGAAHANVQPHSGAQANFAVFLALLNPGDTIMGMDLSHGGHLTHGSPVNVSGKWFNVVHYGVHPETERLDMDQVRDLARQHRPKLIICGYSAYPRVIPFAEFRQIADEVGAYLMADIAHIAGLVASGYHPNPVPLCDVVTTTTHKTLRGPRGGLILTRDEDLGKKLDKAVFPGTQGGPLEHVIAAKAVAFGEALKPEFKAYCGQVIRNAQALAAGLQARQLRLVSGGTDNHLMLIDLRSVNLTGKEADRLMGEIHITTNKNTIPFDPASPFVTSGLRLGTPALTTRGFTEVEFAEVAEIISDRLHAPEDEAIKNRCRERVAALCAQFPLYPHLQFPQPVLA.

(6S)-5,6,7,8-tetrahydrofolate-binding positions include leucine 120 and 124–126 (GHL). N6-(pyridoxal phosphate)lysine is present on lysine 229. 353-355 (SPF) contacts (6S)-5,6,7,8-tetrahydrofolate.

Belongs to the SHMT family. As to quaternary structure, homodimer. Pyridoxal 5'-phosphate serves as cofactor.

The protein resides in the cytoplasm. The catalysed reaction is (6R)-5,10-methylene-5,6,7,8-tetrahydrofolate + glycine + H2O = (6S)-5,6,7,8-tetrahydrofolate + L-serine. Its pathway is one-carbon metabolism; tetrahydrofolate interconversion. It functions in the pathway amino-acid biosynthesis; glycine biosynthesis; glycine from L-serine: step 1/1. Functionally, catalyzes the reversible interconversion of serine and glycine with tetrahydrofolate (THF) serving as the one-carbon carrier. This reaction serves as the major source of one-carbon groups required for the biosynthesis of purines, thymidylate, methionine, and other important biomolecules. Also exhibits THF-independent aldolase activity toward beta-hydroxyamino acids, producing glycine and aldehydes, via a retro-aldol mechanism. This Thermosynechococcus vestitus (strain NIES-2133 / IAM M-273 / BP-1) protein is Serine hydroxymethyltransferase.